Reading from the N-terminus, the 290-residue chain is 4-diphosphocytidyl-2-C-methyl-D-erythritol kinase (290 aa).

Residue lysine 14 is part of the active site. 103–113 (PMGGGLGGGSS) is a binding site for ATP. Aspartate 145 is an active-site residue.

Belongs to the GHMP kinase family. IspE subfamily. In terms of assembly, homodimer.

It carries out the reaction 4-CDP-2-C-methyl-D-erythritol + ATP = 4-CDP-2-C-methyl-D-erythritol 2-phosphate + ADP + H(+). Its pathway is isoprenoid biosynthesis; isopentenyl diphosphate biosynthesis via DXP pathway; isopentenyl diphosphate from 1-deoxy-D-xylulose 5-phosphate: step 3/6. Its function is as follows. Catalyzes the phosphorylation of the position 2 hydroxy group of 4-diphosphocytidyl-2C-methyl-D-erythritol. The chain is 4-diphosphocytidyl-2-C-methyl-D-erythritol kinase from Pectobacterium carotovorum subsp. carotovorum (strain PC1).